The primary structure comprises 124 residues: Small ribosomal subunit protein uS12 (124 aa).

The residue at position 89 (Asp89) is a 3-methylthioaspartic acid. The tract at residues 105–124 (QGVKNRGQARSRYGAKKEKK) is disordered. Residues 111 to 124 (GQARSRYGAKKEKK) show a composition bias toward basic residues.

Belongs to the universal ribosomal protein uS12 family. As to quaternary structure, part of the 30S ribosomal subunit. Contacts proteins S8 and S17. May interact with IF1 in the 30S initiation complex.

In terms of biological role, with S4 and S5 plays an important role in translational accuracy. Its function is as follows. Interacts with and stabilizes bases of the 16S rRNA that are involved in tRNA selection in the A site and with the mRNA backbone. Located at the interface of the 30S and 50S subunits, it traverses the body of the 30S subunit contacting proteins on the other side and probably holding the rRNA structure together. The combined cluster of proteins S8, S12 and S17 appears to hold together the shoulder and platform of the 30S subunit. This chain is Small ribosomal subunit protein uS12, found in Micrococcus luteus (Micrococcus lysodeikticus).